The primary structure comprises 409 residues: NADH-quinone oxidoreductase subunit D (409 aa).

It belongs to the complex I 49 kDa subunit family. NDH-1 is composed of 14 different subunits. Subunits NuoB, C, D, E, F, and G constitute the peripheral sector of the complex.

The protein localises to the cell inner membrane. The catalysed reaction is a quinone + NADH + 5 H(+)(in) = a quinol + NAD(+) + 4 H(+)(out). Functionally, NDH-1 shuttles electrons from NADH, via FMN and iron-sulfur (Fe-S) centers, to quinones in the respiratory chain. The immediate electron acceptor for the enzyme in this species is believed to be ubiquinone. Couples the redox reaction to proton translocation (for every two electrons transferred, four hydrogen ions are translocated across the cytoplasmic membrane), and thus conserves the redox energy in a proton gradient. The sequence is that of NADH-quinone oxidoreductase subunit D from Sulfurovum sp. (strain NBC37-1).